A 39-amino-acid polypeptide reads, in one-letter code: Photosystem II reaction center protein L (39 aa).

A helical transmembrane segment spans residues 18-38; that stretch reads SLYLGLLLVFVMGILFSSYFF.

This sequence belongs to the PsbL family. PSII is composed of 1 copy each of membrane proteins PsbA, PsbB, PsbC, PsbD, PsbE, PsbF, PsbH, PsbI, PsbJ, PsbK, PsbL, PsbM, PsbT, PsbX, PsbY, Psb30/Ycf12, peripheral proteins PsbO, CyanoQ (PsbQ), PsbU, PsbV and a large number of cofactors. It forms dimeric complexes.

Its subcellular location is the cellular thylakoid membrane. In terms of biological role, one of the components of the core complex of photosystem II (PSII). PSII is a light-driven water:plastoquinone oxidoreductase that uses light energy to abstract electrons from H(2)O, generating O(2) and a proton gradient subsequently used for ATP formation. It consists of a core antenna complex that captures photons, and an electron transfer chain that converts photonic excitation into a charge separation. This subunit is found at the monomer-monomer interface and is required for correct PSII assembly and/or dimerization. This Prochlorococcus marinus (strain NATL2A) protein is Photosystem II reaction center protein L.